The following is a 258-amino-acid chain: Homeobox-leucine zipper protein ATHB-7 (258 aa).

Residues asparagine 29–glutamine 88 constitute a DNA-binding region (homeobox). The tract at residues leucine 89–leucine 124 is leucine-zipper. Residues serine 149–valine 183 are disordered. Positions threonine 151–valine 183 are enriched in basic and acidic residues.

The protein belongs to the HD-ZIP homeobox family. Class I subfamily. Interacts with TBP2 and TFIIB1. As to expression, widely expressed.

The protein resides in the nucleus. Functionally, probable transcription activator that may act as growth regulators in response to water deficit. The chain is Homeobox-leucine zipper protein ATHB-7 (ATHB-7) from Arabidopsis thaliana (Mouse-ear cress).